The sequence spans 1406 residues: DNA-directed RNA polymerase subunit beta' (1406 aa).

Residues Cys70, Cys72, Cys85, and Cys88 each contribute to the Zn(2+) site. Mg(2+) contacts are provided by Asp460, Asp462, and Asp464. Residues Cys814, Cys888, Cys895, and Cys898 each coordinate Zn(2+).

Belongs to the RNA polymerase beta' chain family. In terms of assembly, the RNAP catalytic core consists of 2 alpha, 1 beta, 1 beta' and 1 omega subunit. When a sigma factor is associated with the core the holoenzyme is formed, which can initiate transcription. The cofactor is Mg(2+). Requires Zn(2+) as cofactor.

It catalyses the reaction RNA(n) + a ribonucleoside 5'-triphosphate = RNA(n+1) + diphosphate. Its function is as follows. DNA-dependent RNA polymerase catalyzes the transcription of DNA into RNA using the four ribonucleoside triphosphates as substrates. The chain is DNA-directed RNA polymerase subunit beta' from Yersinia enterocolitica serotype O:8 / biotype 1B (strain NCTC 13174 / 8081).